The sequence spans 412 residues: Gamma-glutamyl phosphate reductase (412 aa).

It belongs to the gamma-glutamyl phosphate reductase family.

The protein resides in the cytoplasm. The enzyme catalyses L-glutamate 5-semialdehyde + phosphate + NADP(+) = L-glutamyl 5-phosphate + NADPH + H(+). Its pathway is amino-acid biosynthesis; L-proline biosynthesis; L-glutamate 5-semialdehyde from L-glutamate: step 2/2. Catalyzes the NADPH-dependent reduction of L-glutamate 5-phosphate into L-glutamate 5-semialdehyde and phosphate. The product spontaneously undergoes cyclization to form 1-pyrroline-5-carboxylate. In Aliarcobacter butzleri (strain RM4018) (Arcobacter butzleri), this protein is Gamma-glutamyl phosphate reductase.